Reading from the N-terminus, the 161-residue chain is Large ribosomal subunit protein uL15 (161 aa).

Positions methionine 1–glycine 43 are disordered. The segment covering arginine 21–glycine 37 has biased composition (gly residues).

It belongs to the universal ribosomal protein uL15 family. In terms of assembly, part of the 50S ribosomal subunit.

Its function is as follows. Binds to the 23S rRNA. In Nitrobacter hamburgensis (strain DSM 10229 / NCIMB 13809 / X14), this protein is Large ribosomal subunit protein uL15.